The following is a 540-amino-acid chain: Chaperonin GroEL (540 aa).

ATP contacts are provided by residues 29 to 32 (TLGP), 86 to 90 (DGTTT), G413, 476 to 478 (NAA), and D492.

It belongs to the chaperonin (HSP60) family. Forms a cylinder of 14 subunits composed of two heptameric rings stacked back-to-back. Interacts with the co-chaperonin GroES.

It localises to the cytoplasm. The enzyme catalyses ATP + H2O + a folded polypeptide = ADP + phosphate + an unfolded polypeptide.. In terms of biological role, together with its co-chaperonin GroES, plays an essential role in assisting protein folding. The GroEL-GroES system forms a nano-cage that allows encapsulation of the non-native substrate proteins and provides a physical environment optimized to promote and accelerate protein folding. The protein is Chaperonin GroEL of Geobacillus thermodenitrificans (strain NG80-2).